A 477-amino-acid polypeptide reads, in one-letter code: ATP synthase subunit beta (477 aa).

ATP is bound at residue 151 to 158; the sequence is GGAGVGKT.

Belongs to the ATPase alpha/beta chains family. F-type ATPases have 2 components, CF(1) - the catalytic core - and CF(0) - the membrane proton channel. CF(1) has five subunits: alpha(3), beta(3), gamma(1), delta(1), epsilon(1). CF(0) has three main subunits: a(1), b(2) and c(9-12). The alpha and beta chains form an alternating ring which encloses part of the gamma chain. CF(1) is attached to CF(0) by a central stalk formed by the gamma and epsilon chains, while a peripheral stalk is formed by the delta and b chains.

The protein localises to the cell inner membrane. It carries out the reaction ATP + H2O + 4 H(+)(in) = ADP + phosphate + 5 H(+)(out). Functionally, produces ATP from ADP in the presence of a proton gradient across the membrane. The catalytic sites are hosted primarily by the beta subunits. The sequence is that of ATP synthase subunit beta from Bradyrhizobium diazoefficiens (strain JCM 10833 / BCRC 13528 / IAM 13628 / NBRC 14792 / USDA 110).